The sequence spans 309 residues: Oxygen-dependent coproporphyrinogen-III oxidase (309 aa).

S94 contacts substrate. A divalent metal cation is bound by residues H98 and H108. H108 functions as the Proton donor in the catalytic mechanism. 110 to 112 (NVR) lines the substrate pocket. Residues H147 and H177 each coordinate a divalent metal cation. The important for dimerization stretch occupies residues 242–277 (YVEFNLVWDRGTLFGLQTGGRTESILMSLPPLVRWE). Residue 260–262 (GGR) participates in substrate binding.

Belongs to the aerobic coproporphyrinogen-III oxidase family. As to quaternary structure, homodimer. A divalent metal cation is required as a cofactor.

Its subcellular location is the cytoplasm. The enzyme catalyses coproporphyrinogen III + O2 + 2 H(+) = protoporphyrinogen IX + 2 CO2 + 2 H2O. It functions in the pathway porphyrin-containing compound metabolism; protoporphyrin-IX biosynthesis; protoporphyrinogen-IX from coproporphyrinogen-III (O2 route): step 1/1. Its function is as follows. Involved in the heme biosynthesis. Catalyzes the aerobic oxidative decarboxylation of propionate groups of rings A and B of coproporphyrinogen-III to yield the vinyl groups in protoporphyrinogen-IX. The chain is Oxygen-dependent coproporphyrinogen-III oxidase from Yersinia pseudotuberculosis serotype O:1b (strain IP 31758).